The sequence spans 57 residues: Large ribosomal subunit protein bL32 (57 aa).

The protein belongs to the bacterial ribosomal protein bL32 family.

In Geobacillus sp. (strain WCH70), this protein is Large ribosomal subunit protein bL32.